The primary structure comprises 332 residues: Biotin synthase (332 aa).

One can recognise a Radical SAM core domain in the interval 46 to 275; the sequence is YYGKKVKLNM…SKEIRISGGR (230 aa). [4Fe-4S] cluster contacts are provided by C64, C68, and C71. The [2Fe-2S] cluster site is built by C108, C140, C200, and R270.

It belongs to the radical SAM superfamily. Biotin synthase family. Homodimer. Requires [4Fe-4S] cluster as cofactor. The cofactor is [2Fe-2S] cluster.

It carries out the reaction (4R,5S)-dethiobiotin + (sulfur carrier)-SH + 2 reduced [2Fe-2S]-[ferredoxin] + 2 S-adenosyl-L-methionine = (sulfur carrier)-H + biotin + 2 5'-deoxyadenosine + 2 L-methionine + 2 oxidized [2Fe-2S]-[ferredoxin]. It participates in cofactor biosynthesis; biotin biosynthesis; biotin from 7,8-diaminononanoate: step 2/2. Catalyzes the conversion of dethiobiotin (DTB) to biotin by the insertion of a sulfur atom into dethiobiotin via a radical-based mechanism. The polypeptide is Biotin synthase (Lysinibacillus sphaericus (Bacillus sphaericus)).